A 276-amino-acid chain; its full sequence is Exosome complex component Rrp42 (276 aa).

The protein belongs to the RNase PH family. Rrp42 subfamily. Component of the archaeal exosome complex. Forms a hexameric ring-like arrangement composed of 3 Rrp41-Rrp42 heterodimers. The hexameric ring associates with a trimer of Rrp4 and/or Csl4 subunits.

It is found in the cytoplasm. Functionally, non-catalytic component of the exosome, which is a complex involved in RNA degradation. Contributes to the structuring of the Rrp41 active site. This chain is Exosome complex component Rrp42, found in Aeropyrum pernix (strain ATCC 700893 / DSM 11879 / JCM 9820 / NBRC 100138 / K1).